The following is a 555-amino-acid chain: Solute carrier family 22 member 2 (555 aa).

Topologically, residues 1 to 21 (MPTTVDDVLEHGGEFHFFQKQ) are cytoplasmic. A helical membrane pass occupies residues 22–42 (MFFLLALLSATFTPIYVGIVF). Residues 43–150 (LGFTPDHRCR…LVCANSWMLD (108 aa)) are Extracellular-facing. A glycan (N-linked (GlcNAc...) asparagine) is linked at Asn72. A helical membrane pass occupies residues 151–171 (LFQASVNVGFFFGSVSIGYIA). The Cytoplasmic portion of the chain corresponds to 172 to 177 (DRFGRK). A helical transmembrane segment spans residues 178–198 (LCLLTTVLINAAAGVLMAISP). Topologically, residues 199-210 (TYTWMLIFRLIQ) are extracellular. Residues 211–231 (GLVSKAGWLIGYILITEFVGR) form a helical membrane-spanning segment. Over 232–238 (RYRRTVG) the chain is Cytoplasmic. A helical transmembrane segment spans residues 239 to 259 (IFYQVAYTVGLLVLAGVAYAL). Residues 260–263 (PHWR) are Extracellular-facing. The helical transmembrane segment at 264-284 (WLQFTVTLPNFFFLLYYWCIP) threads the bilayer. Positions 284–288 (PESPR) match the Proline-rich sequence motif. Residues 285-348 (ESPRWLISQN…VRTPQIRKHT (64 aa)) lie on the Cytoplasmic side of the membrane. Residues 349–369 (MILMYNWFTSSVLYQGLIMHM) form a helical membrane-spanning segment. Over 370-375 (GLAGDN) the chain is Extracellular. A helical membrane pass occupies residues 376 to 396 (IYLDFFYSALVEFPAAFMIIV). The Cytoplasmic segment spans residues 397–404 (TIDRIGRR). The chain crosses the membrane as a helical span at residues 405–425 (YPWAASNMVAGAACLASVFIP). Residues 426 to 432 (GDLQWLK) are Extracellular-facing. A helical membrane pass occupies residues 433–453 (IIISCLGRMGITMAYEIVRLV). Over 454 to 464 (NAELYPTFIRN) the chain is Cytoplasmic. Residues 465 to 485 (LGVHICSSMCDIGGIITPFLV) traverse the membrane as a helical segment. Over 486-494 (YRLTNIWLE) the chain is Extracellular. A helical membrane pass occupies residues 495 to 515 (LPLMVFGVLGLVAGGLVLLLP). Over 516–555 (ETKGKALPETIEEAENMQRPRKNKEKMIYLQVQKLDIPLN) the chain is Cytoplasmic.

This sequence belongs to the major facilitator (TC 2.A.1) superfamily. Organic cation transporter (TC 2.A.1.19) family. Tyrosine phosphorylated.

Its subcellular location is the basolateral cell membrane. The protein localises to the basal cell membrane. It is found in the apical cell membrane. The catalysed reaction is (R)-noradrenaline(out) = (R)-noradrenaline(in). The enzyme catalyses (R)-adrenaline(out) = (R)-adrenaline(in). It catalyses the reaction serotonin(out) = serotonin(in). It carries out the reaction dopamine(out) = dopamine(in). The catalysed reaction is histamine(out) = histamine(in). The enzyme catalyses thiamine(in) = thiamine(out). It catalyses the reaction creatinine(in) = creatinine(out). It carries out the reaction 1-methylnicotinamide(out) = 1-methylnicotinamide(in). The catalysed reaction is guanidine(out) = guanidine(in). The enzyme catalyses choline(out) = choline(in). It catalyses the reaction agmatine(out) = agmatine(in). It carries out the reaction putrescine(out) = putrescine(in). The catalysed reaction is spermidine(in) = spermidine(out). The enzyme catalyses tyramine(in) = tyramine(out). It catalyses the reaction L-histidyl-L-proline diketopiperazine(in) = L-histidyl-L-proline diketopiperazine(out). It carries out the reaction (R)-salsolinol(in) = (R)-salsolinol(out). The catalysed reaction is N-methyl-(R)-salsolinol(in) = N-methyl-(R)-salsolinol(out). The enzyme catalyses acetylcholine(in) = acetylcholine(out). It catalyses the reaction prostaglandin F2alpha(out) = prostaglandin F2alpha(in). It carries out the reaction prostaglandin E2(out) = prostaglandin E2(in). Tyrosine phosphorylation of the transporter leads to activation of the transport activity. Inhibited by cGMP, most likely through a cGMP-binding protein that interacts with OCT2. Its function is as follows. Electrogenic voltage-dependent transporter that mediates the transport of a variety of organic cations such as endogenous bioactive amines, cationic drugs and xenobiotics. Functions as a Na(+)-independent, bidirectional uniporter. Cation cellular uptake or release is driven by the electrochemical potential, i.e. membrane potential and concentration gradient. However, may also engage electroneutral cation exchange when saturating concentrations of cation substrates are reached. Predominantly expressed at the basolateral membrane of hepatocytes and proximal tubules and involved in the uptake and disposition of cationic compounds by hepatic and renal clearance from the blood flow. Implicated in monoamine neurotransmitters uptake such as histamine, dopamine, adrenaline/epinephrine, noradrenaline/norepinephrine, serotonin and tyramine, thereby supporting a physiological role in the central nervous system by regulating interstitial concentrations of neurotransmitters. Also capable of transporting dopaminergic neuromodulators cyclo(his-pro), salsolinol and N-methyl-salsolinol, thereby involved in the maintenance of dopaminergic cell integrity in the central nervous system. Mediates the bidirectional transport of acetylcholine (ACh) at the apical membrane of ciliated cell in airway epithelium, thereby playing a role in luminal release of ACh from bronchial epithelium. Also transports guanidine and endogenous monoamines such as vitamin B1/thiamine, creatinine and N-1-methylnicotinamide (NMN). Mediates the uptake and efflux of quaternary ammonium compound choline. Mediates the bidirectional transport of polyamine agmatine and the uptake of polyamines putrescine and spermidine. Able to transport non-amine endogenous compounds such as prostaglandin E2 (PGE2) and prostaglandin F2-alpha (PGF2-alpha). Also involved in the uptake of xenobiotic 4-(4-(dimethylamino)styryl)-N-methylpyridinium (ASP). May contribute to regulate the transport of organic compounds in testis across the blood-testis-barrier. This Pongo abelii (Sumatran orangutan) protein is Solute carrier family 22 member 2 (SLC22A2).